The following is a 370-amino-acid chain: Protein SHI RELATED SEQUENCE 1 (370 aa).

A disordered region spans residues 1–37 (MAGFFSLDGGGGGGGGGGNNQEDHRSNTNPPPPVSEA). Residues 8 to 19 (DGGGGGGGGGGN) are compositionally biased toward gly residues. 6 residues coordinate Zn(2+): Cys144, Cys147, Cys155, Cys160, Cys164, and Cys171. Residues 144-171 (CQDCGNQAKKDCSHMRCRTCCKSRGFEC) constitute a DNA-binding region (zn(2)-C6 fungal-type; degenerate). The Required for homo- and heterodimerization signature appears at 271 to 274 (IGGH).

This sequence belongs to the SHI protein family. In terms of assembly, forms homodimers and heterodimers with LRP1. Expressed in flowers, seeds and seedlings.

It is found in the nucleus. Its function is as follows. Transcription activator that binds DNA on 5'-ACTCTAC-3' and promotes auxin homeostasis-regulating gene expression (e.g. YUC genes), as well as genes affecting stamen development, cell expansion and timing of flowering. Synergistically with other SHI-related proteins, regulates gynoecium, stamen and leaf development in a dose-dependent manner, controlling apical-basal patterning. Promotes style and stigma formation, and influences vascular development during gynoecium development. May also have a role in the formation and/or maintenance of the shoot apical meristem (SAM). The polypeptide is Protein SHI RELATED SEQUENCE 1 (SRS1) (Arabidopsis thaliana (Mouse-ear cress)).